The sequence spans 200 residues: Transcription elongation factor A protein-like 5 (200 aa).

Basic and acidic residues-rich tracts occupy residues 1 to 49 (MEKF…KLEV), 61 to 85 (GEGK…KPDS), 94 to 106 (RAAE…DYVP), 114 to 153 (DRGT…EELR), and 190 to 200 (GQKDLEDAPFV). The tract at residues 1-200 (MEKFYKENEG…QKDLEDAPFV (200 aa)) is disordered.

It belongs to the TFS-II family. TFA subfamily.

The protein localises to the nucleus. May be involved in transcriptional regulation. In Mus musculus (Mouse), this protein is Transcription elongation factor A protein-like 5 (Tceal5).